The following is a 174-amino-acid chain: ATP-dependent protease subunit HslV (174 aa).

T2 is a catalytic residue. Residues G157, C160, and T163 each coordinate Na(+).

Belongs to the peptidase T1B family. HslV subfamily. In terms of assembly, a double ring-shaped homohexamer of HslV is capped on each side by a ring-shaped HslU homohexamer. The assembly of the HslU/HslV complex is dependent on binding of ATP.

It is found in the cytoplasm. The catalysed reaction is ATP-dependent cleavage of peptide bonds with broad specificity.. Allosterically activated by HslU binding. In terms of biological role, protease subunit of a proteasome-like degradation complex believed to be a general protein degrading machinery. This chain is ATP-dependent protease subunit HslV, found in Cellvibrio japonicus (strain Ueda107) (Pseudomonas fluorescens subsp. cellulosa).